Consider the following 775-residue polypeptide: Minichromosome maintenance protein 5 (775 aa).

The segment at 1–22 (MSFDRPEIYSAPVLQGESPNDD) is disordered. The region spanning 366–573 (LYEILTNSIA…RDISIANHVI (208 aa)) is the MCM domain. 416–423 (GDPGTAKS) provides a ligand contact to ATP. The Arginine finger signature appears at 548 to 551 (SRFD).

The protein belongs to the MCM family. As to quaternary structure, component of the MCM2-7 complex. The complex forms a toroidal hexameric ring with the proposed subunit order MCM2-MCM6-MCM4-MCM7-MCM3-MCM5; loaded onto DNA, forms a head-head double hexamer. Interacts with CSM1.

Its subcellular location is the nucleus. The catalysed reaction is ATP + H2O = ADP + phosphate + H(+). Functionally, acts as a component of the MCM2-7 complex (MCM complex) which is the putative replicative helicase essential for 'once per cell cycle' DNA replication initiation and elongation in eukaryotic cells. The active ATPase sites in the MCM2-7 ring are formed through the interaction surfaces of two neighboring subunits such that a critical structure of a conserved arginine finger motif is provided in trans relative to the ATP-binding site of the Walker A box of the adjacent subunit. The six ATPase active sites, however, are likely to contribute differentially to the complex helicase activity; specifically the MCM2-MCM5 association is proposed to be reversible and to mediate a open ring conformation which may facilitate DNA loading. Once loaded onto DNA, double hexamers can slide on dsDNA in the absence of ATPase activity. This is Minichromosome maintenance protein 5 (MCM5) from Saccharomyces cerevisiae (strain ATCC 204508 / S288c) (Baker's yeast).